The following is a 152-amino-acid chain: Proteolipid protein 2 (152 aa).

Positions 19 to 137 (FSRTRKGILL…DAYFTFPLRQ (119 aa)) constitute an MARVEL domain. The next 3 helical transmembrane spans lie at 25–45 (GILLLAEIILCLVILICFSAG), 48–68 (GYSSLSVVEMVLAIVFFVIYM), and 85–105 (FFRTLIAAILYLITSIFVLVE). A glycan (N-linked (GlcNAc...) asparagine) is linked at Asn-108. A helical membrane pass occupies residues 112-132 (IAAGVLGLLATCLFGYDAYFT).

Its subcellular location is the membrane. Its function is as follows. May play a role in cell differentiation in the intestinal epithelium. In Oryctolagus cuniculus (Rabbit), this protein is Proteolipid protein 2 (PLP2).